A 488-amino-acid chain; its full sequence is Phenylalanine--tRNA ligase alpha subunit (488 aa).

Residues T332, 371–373, and F410 contribute to the L-phenylalanine site; that span reads QLD. E412 contacts Mg(2+). F435 contributes to the L-phenylalanine binding site.

It belongs to the class-II aminoacyl-tRNA synthetase family. Phe-tRNA synthetase alpha subunit type 2 subfamily. In terms of assembly, tetramer of two alpha and two beta subunits. Mg(2+) serves as cofactor.

Its subcellular location is the cytoplasm. It catalyses the reaction tRNA(Phe) + L-phenylalanine + ATP = L-phenylalanyl-tRNA(Phe) + AMP + diphosphate + H(+). This chain is Phenylalanine--tRNA ligase alpha subunit, found in Aeropyrum pernix (strain ATCC 700893 / DSM 11879 / JCM 9820 / NBRC 100138 / K1).